The primary structure comprises 507 residues: ATP synthase subunit alpha, chloroplastic (507 aa).

170–177 (GDRQTGKT) is a binding site for ATP.

This sequence belongs to the ATPase alpha/beta chains family. In terms of assembly, F-type ATPases have 2 components, CF(1) - the catalytic core - and CF(0) - the membrane proton channel. CF(1) has five subunits: alpha(3), beta(3), gamma(1), delta(1), epsilon(1). CF(0) has four main subunits: a, b, b' and c.

The protein localises to the plastid. Its subcellular location is the chloroplast thylakoid membrane. It catalyses the reaction ATP + H2O + 4 H(+)(in) = ADP + phosphate + 5 H(+)(out). Its function is as follows. Produces ATP from ADP in the presence of a proton gradient across the membrane. The alpha chain is a regulatory subunit. This chain is ATP synthase subunit alpha, chloroplastic, found in Spinacia oleracea (Spinach).